The following is a 583-amino-acid chain: Nuclear hormone receptor family member nhr-31 (583 aa).

The segment at 43–77 is disordered; that stretch reads DLRTSGATSSSGPATSYIIRPSDKQPTVSSGGSQN. Positions 46 to 58 are enriched in low complexity; it reads TSGATSSSGPATS. Residues 66–77 are compositionally biased toward polar residues; it reads KQPTVSSGGSQN. A DNA-binding region (nuclear receptor) is located at residues 79 to 154; the sequence is DSVCAVCGDG…AGMDPKAVRP (76 aa). NR C4-type zinc fingers lie at residues 82–102 and 118–142; these read CAVC…CYGC and CRFS…FQRC. The NR LBD domain occupies 195-464; sequence ETRILLMQLM…DNLLAEMFGD (270 aa).

This sequence belongs to the nuclear hormone receptor family.

It is found in the nucleus. In terms of biological role, orphan nuclear receptor. The sequence is that of Nuclear hormone receptor family member nhr-31 (nhr-31) from Caenorhabditis elegans.